The sequence spans 117 residues: Large ribosomal subunit protein uL18 (117 aa).

This sequence belongs to the universal ribosomal protein uL18 family. Part of the 50S ribosomal subunit; part of the 5S rRNA/L5/L18/L25 subcomplex. Contacts the 5S and 23S rRNAs.

Functionally, this is one of the proteins that bind and probably mediate the attachment of the 5S RNA into the large ribosomal subunit, where it forms part of the central protuberance. The sequence is that of Large ribosomal subunit protein uL18 from Colwellia psychrerythraea (strain 34H / ATCC BAA-681) (Vibrio psychroerythus).